A 444-amino-acid chain; its full sequence is Cop9 signalosome complex subunit 11 (444 aa).

Positions 195 to 367 (FFTMMTSEPL…IHFEDSSILQ (173 aa)) constitute a PCI domain. Residues 419 to 439 (SSDDMDIDEVNDRSDISDSEG) form a disordered region.

Component of a COP9 signalosome-like (CSN) complex, composed of RRI1/CSN5, CSN9, RRI2/CSN10, PCI8/CSN11, CSN12 and CSI1. Interacts with PRT1 and RPG1, 2 subunits of the core complex of translation initiation factor 3 (eIF3).

The protein localises to the cytoplasm. Its subcellular location is the nucleus. In terms of biological role, component of the COP9 signalosome (CSN) complex that acts as an regulator of the ubiquitin (Ubl) conjugation pathway by mediating the deneddylation of the cullin subunit of SCF-type E3 ubiquitin-protein ligase complexes The CSN complex is involved in the regulation of the mating pheromone response. PCI8 may also be involved in transcriptional and translational control. The protein is Cop9 signalosome complex subunit 11 (PCI8) of Saccharomyces cerevisiae (strain ATCC 204508 / S288c) (Baker's yeast).